The chain runs to 295 residues: Histamine N-methyltransferase (295 aa).

Ala-2 bears the Blocked amino end (Ala) mark. Glu-28 contacts substrate. Residues Gly-60, Glu-89, Gln-94, Ser-120, and Ile-143 each coordinate S-adenosyl-L-methionine. Residue Asn-284 coordinates substrate.

The protein belongs to the class I-like SAM-binding methyltransferase superfamily. HNMT family. In terms of assembly, monomer.

Its subcellular location is the cytoplasm. It carries out the reaction histamine + S-adenosyl-L-methionine = N(tau)-methylhistamine + S-adenosyl-L-homocysteine + H(+). Functionally, inactivates histamine by N-methylation. Plays an important role in degrading histamine and in regulating the airway response to histamine. This chain is Histamine N-methyltransferase (Hnmt), found in Rattus norvegicus (Rat).